A 512-amino-acid chain; its full sequence is Cercosporin MFS transporter CTB4 (512 aa).

The next 12 helical transmembrane spans lie at 72–92, 110–130, 142–162, 170–190, 202–222, 230–250, 306–326, 343–363, 383–403, 407–427, 456–476, and 480–500; these read WVIT…SSVF, VVLG…IFWG, LLAG…ARSL, FLGG…LADI, TVGA…SVLV, WIAN…FPFL, ILLM…NFFL, ASLP…LLSF, LLLM…FAWT, TMNP…IHLI, LFAA…GVKW, and ILAL…YFGA.

Belongs to the major facilitator superfamily. CAR1 family.

It is found in the cell membrane. Its function is as follows. MFS transporter; part of the gene cluster that mediates the biosynthesis of cercosporin, a light-activated, non-host-selective toxin. The perylenequinone chromophore of cercosporin absorbs light energy to attain an electronically-activated triplet state and produces active oxygen species such as the hydroxyl radical, superoxide, hydrogen peroxide or singlet oxygen upon reaction with oxygen molecules. These reactive oxygen species cause damage to various cellular components including lipids, proteins and nucleic acids. Responsible for secretion and accumulation of cercosporin, but does not play any roles in self-protection against the toxicity of cercosporin. The protein is Cercosporin MFS transporter CTB4 of Cercospora nicotianae (Barn spot disease fungus).